The primary structure comprises 306 residues: Homoserine O-acetyltransferase (306 aa).

Cys142 (acyl-thioester intermediate) is an active-site residue. 2 residues coordinate substrate: Lys163 and Ser192. His235 (proton acceptor) is an active-site residue. Residue Glu237 is part of the active site. Substrate is bound at residue Arg249.

This sequence belongs to the MetA family.

The protein resides in the cytoplasm. It carries out the reaction L-homoserine + acetyl-CoA = O-acetyl-L-homoserine + CoA. It functions in the pathway amino-acid biosynthesis; L-methionine biosynthesis via de novo pathway; O-acetyl-L-homoserine from L-homoserine: step 1/1. Functionally, transfers an acetyl group from acetyl-CoA to L-homoserine, forming acetyl-L-homoserine. The chain is Homoserine O-acetyltransferase from Clostridium botulinum (strain Eklund 17B / Type B).